The chain runs to 395 residues: Zinc-regulated GTPase metalloprotein activator 1E (395 aa).

The tract at residues 1 to 22 (MLPAVGSVDEEEDPAEEDCPEL) is disordered. Over residues 8-20 (VDEEEDPAEEDCP) the composition is skewed to acidic residues. The short motif at 17 to 24 (EDCPELVP) is the psi-PxLVp motif element. Position 49–56 (49–56 (GYLGAGKT)) interacts with GTP. Zn(2+) contacts are provided by Cys107, Cys109, and Cys110. The CXCC motif signature appears at 107 to 110 (CLCC). GTP contacts are provided by residues 110-114 (CSVKD) and 203-206 (NKTD). Residues 274–377 (IVTITFEVPG…ILKQLFIATV (104 aa)) enclose the CobW C-terminal domain.

Belongs to the SIMIBI class G3E GTPase family. ZNG1 subfamily.

The protein resides in the nucleus. The enzyme catalyses GTP + H2O = GDP + phosphate + H(+). Its function is as follows. Zinc chaperone that directly transfers zinc cofactor to target metalloproteins, thereby activating them. Catalyzes zinc insertion into the active site of methionine aminopeptidase METAP1, which function to cleave the initiator methionine from polypeptides during or after protein translation. Mechanistically, the N-terminal psi-PxLVp motif binds to the C6H2-type zinc finger of inactive form of METAP1. After formation of the docked complex, zinc is transferred from the CXCC motif in the GTPase domain of ZNG1E to the zinc binding site in the peptidase domain of METAP1 in a process requiring GTP hydrolysis. GTP/GDP exchange is required for release of active METAP1. This is Zinc-regulated GTPase metalloprotein activator 1E from Homo sapiens (Human).